Here is a 453-residue protein sequence, read N- to C-terminus: Homeobox protein meis3 (453 aa).

The tract at residues histidine 33–lysine 64 is disordered. Positions glycine 102–aspartate 185 constitute an MEIS N-terminal domain. The interval leucine 192–glycine 272 is disordered. Over residues glycine 197–tryptophan 209 the composition is skewed to polar residues. Residues serine 218–glycine 230 show a composition bias toward low complexity. The span at leucine 231 to glutamine 242 shows a compositional bias: polar residues. The segment at residues arginine 267–methionine 329 is a DNA-binding region (homeobox).

Belongs to the TALE/MEIS homeobox family.

It is found in the nucleus. Its function is as follows. A caudalizing protein which is required to pattern the anterior/posterior (A/P) axis during central nervous system (CNS) formation. Inhibits anterior neural expression and acts as a transcriptional activator to induce posterior neural gene expression. Maintains a proper A/P balance required for hindbrain formation by activating the FGF/MAPK pathway, which modulates the planar cell polarity (PCP) pathway. Interacts with retinoid signaling during hindbrain patterning. This chain is Homeobox protein meis3, found in Xenopus tropicalis (Western clawed frog).